We begin with the raw amino-acid sequence, 310 residues long: 4-hydroxyproline epimerase (310 aa).

Catalysis depends on C88, which acts as the Proton acceptor. Substrate-binding positions include G89 to H90, H208, and D232. Catalysis depends on C236, which acts as the Proton donor. G237–T238 contributes to the substrate binding site.

It belongs to the proline racemase family. Homodimer.

It carries out the reaction trans-4-hydroxy-L-proline = cis-4-hydroxy-D-proline. In terms of biological role, allows intracellular utilization of 4-hydroxyproline, one of the major constituents of host collagen, by converting 4-hydroxy-L-proline to 4-hydroxy-D-proline, which can be further metabolized by intracellular 4-hydroxy-D-proline oxidases. The sequence is that of 4-hydroxyproline epimerase from Burkholderia cenocepacia (strain HI2424).